The primary structure comprises 88 residues: Small ribosomal subunit protein bS18 (88 aa).

It belongs to the bacterial ribosomal protein bS18 family. In terms of assembly, part of the 30S ribosomal subunit. Forms a tight heterodimer with protein bS6.

In terms of biological role, binds as a heterodimer with protein bS6 to the central domain of the 16S rRNA, where it helps stabilize the platform of the 30S subunit. The polypeptide is Small ribosomal subunit protein bS18 (Aliarcobacter butzleri (strain RM4018) (Arcobacter butzleri)).